Here is a 757-residue protein sequence, read N- to C-terminus: Polyribonucleotide nucleotidyltransferase (757 aa).

Positions 532 and 538 each coordinate Mg(2+). Residues 598 to 657 (PRVTAIKVPVDKIGEVIGPKGKMINSITEQTGANISIEDDGTVFVGATDGPSAQAAIDMI) form the KH domain. The S1 motif domain maps to 669–738 (GERFLGTVVK…NRGKISLIPV (70 aa)).

This sequence belongs to the polyribonucleotide nucleotidyltransferase family. It depends on Mg(2+) as a cofactor.

It localises to the cytoplasm. It carries out the reaction RNA(n+1) + phosphate = RNA(n) + a ribonucleoside 5'-diphosphate. Involved in mRNA degradation. Catalyzes the phosphorolysis of single-stranded polyribonucleotides processively in the 3'- to 5'-direction. This is Polyribonucleotide nucleotidyltransferase from Rhodococcus jostii (strain RHA1).